Consider the following 396-residue polypeptide: Phosphoglycerate kinase (396 aa).

Residues 21-23, R36, 59-62, R118, and R151 each bind substrate; these read DFN and HLGR. ATP-binding positions include K201, G292, E323, and 349-352; that span reads GGDS.

Belongs to the phosphoglycerate kinase family. In terms of assembly, monomer.

The protein localises to the cytoplasm. The catalysed reaction is (2R)-3-phosphoglycerate + ATP = (2R)-3-phospho-glyceroyl phosphate + ADP. The protein operates within carbohydrate degradation; glycolysis; pyruvate from D-glyceraldehyde 3-phosphate: step 2/5. This is Phosphoglycerate kinase from Leptospira biflexa serovar Patoc (strain Patoc 1 / Ames).